Here is a 335-residue protein sequence, read N- to C-terminus: Phosphate acyltransferase (335 aa).

This sequence belongs to the PlsX family. In terms of assembly, homodimer. Probably interacts with PlsY.

It is found in the cytoplasm. It catalyses the reaction a fatty acyl-[ACP] + phosphate = an acyl phosphate + holo-[ACP]. Its pathway is lipid metabolism; phospholipid metabolism. In terms of biological role, catalyzes the reversible formation of acyl-phosphate (acyl-PO(4)) from acyl-[acyl-carrier-protein] (acyl-ACP). This enzyme utilizes acyl-ACP as fatty acyl donor, but not acyl-CoA. The sequence is that of Phosphate acyltransferase from Streptococcus equi subsp. equi (strain 4047).